The primary structure comprises 530 residues: Probable phosphoacetylglucosamine mutase (530 aa).

Ser62 serves as the catalytic Phosphoserine intermediate. Residues Ser62, Asp278, Asp280, and Asp282 each contribute to the Mg(2+) site. Residues 369–371, 481–485, and Arg490 each bind substrate; these read EPN and RPSGT.

The protein belongs to the phosphohexose mutase family. Mg(2+) is required as a cofactor.

It carries out the reaction N-acetyl-alpha-D-glucosamine 1-phosphate = N-acetyl-D-glucosamine 6-phosphate. It functions in the pathway nucleotide-sugar biosynthesis; UDP-N-acetyl-alpha-D-glucosamine biosynthesis; N-acetyl-alpha-D-glucosamine 1-phosphate from alpha-D-glucosamine 6-phosphate (route I): step 2/2. Its function is as follows. Catalyzes the conversion of GlcNAc-6-P into GlcNAc-1-P during the synthesis of uridine diphosphate/UDP-GlcNAc, which is a biosynthetic precursor of chitin and also supplies the amino sugars for N-linked oligosaccharides of glycoproteins. This Encephalitozoon cuniculi (strain GB-M1) (Microsporidian parasite) protein is Probable phosphoacetylglucosamine mutase.